A 932-amino-acid polypeptide reads, in one-letter code: MRVKETLNLGKTKFKMRGNLPVKEVERQNVWAENKVYEQRQKLNEGKPSFILHDGPPYANGDIHMGHALNKITKDFIVRYKSMNGFRAPYVPGWDTHGLPIEQKLKQAGYDRKKMTDNEFRELCRKYALEQVDRQRDEFKRLGVAGEWDNPYLTLKPEFEAAQVRVFGAFAKRHLIYRGQKPVFWSWSSESALAEAEVEYHDVTSPSAFYGEHVIDGKGVLDDDTYMVVWTTTPWTIPASEGITIDASFDYVVVQPAGENRKFVLAAELLDENAERFGWEDVQVLKTVKGAELENILCEHPFDNSRHLVTMLGDFVTLDSGTGLVHTAPGYGEDDYRIGKQYDLPIFAPVDDKGFLTAEAGDDFAGVFYDDANKIALDKLKAAGLLLKYMPYEHSYPFDWRTKKPIIFRATPQWFASVGDMRDEILKSMDDVEFFPEWGKKRLYNMIRDRGDWVISRQRVWGVPLPIFYAEDGTAIMDEVTINHVADLFGKYGSNVWFERDAKDLLPDGYTNEHSPNGTFTKETDIMDVWFDSGSSHQGVLAERSYLDYPADLYLEGSDQYRGWFNSSLITSVAVSGHAPYKQVLSQGFTLDNQGRKMSKSLGNTIAPADVIKQMGAEIVRMWVASVDTSSDVRVSMESFKQVADSYKKFRNTVRFMLGNTADFDPKANRVAYEDLASVDQYMETRLNEFVAETKDHYDHYDFLDIYKKLINFLTVDLSNFYLDIAKDIMYIDAEDSHSRRSMQTVFYDVLVALTKLFTPMLPHTTEEIWPFLKEPEEFAQLAEMPAVQNYANSDELMAQWTRFMDLRSNVLKALEEARDAKLIGKSLEAHLDLYVDDDTQAFLDHLNTNVRQMLMVSALDLHALSDAPEDAETFGDTLAIKVGHADGDVCDRCRMVKTDVGSDEAYPMLCARCAAIVRENYPESVTTGLEA.

Residues 57–67 (PYANGDIHMGH) carry the 'HIGH' region motif. Residue glutamate 556 participates in L-isoleucyl-5'-AMP binding. The 'KMSKS' region signature appears at 597 to 601 (KMSKS). Residue lysine 600 participates in ATP binding. 4 residues coordinate Zn(2+): cysteine 891, cysteine 894, cysteine 911, and cysteine 914.

It belongs to the class-I aminoacyl-tRNA synthetase family. IleS type 1 subfamily. As to quaternary structure, monomer. The cofactor is Zn(2+).

It localises to the cytoplasm. The catalysed reaction is tRNA(Ile) + L-isoleucine + ATP = L-isoleucyl-tRNA(Ile) + AMP + diphosphate. Functionally, catalyzes the attachment of isoleucine to tRNA(Ile). As IleRS can inadvertently accommodate and process structurally similar amino acids such as valine, to avoid such errors it has two additional distinct tRNA(Ile)-dependent editing activities. One activity is designated as 'pretransfer' editing and involves the hydrolysis of activated Val-AMP. The other activity is designated 'posttransfer' editing and involves deacylation of mischarged Val-tRNA(Ile). The chain is Isoleucine--tRNA ligase from Lactiplantibacillus plantarum (strain ATCC BAA-793 / NCIMB 8826 / WCFS1) (Lactobacillus plantarum).